Here is a 208-residue protein sequence, read N- to C-terminus: Redox-sensing transcriptional repressor Rex (208 aa).

The H-T-H motif DNA-binding region spans 16-55 (VYSRYLENLYRKGITTVSSADIAQGVGVTSAQVRKDLAYF). 90–95 (GAGNLG) is an NAD(+) binding site.

Belongs to the transcriptional regulatory Rex family. As to quaternary structure, homodimer.

It localises to the cytoplasm. Its function is as follows. Modulates transcription in response to changes in cellular NADH/NAD(+) redox state. This is Redox-sensing transcriptional repressor Rex from Carboxydothermus hydrogenoformans (strain ATCC BAA-161 / DSM 6008 / Z-2901).